Reading from the N-terminus, the 206-residue chain is Large ribosomal subunit protein uL4 (206 aa).

The tract at residues 47–71 is disordered; sequence TRAQKGRSEVAGSTRKQWRQKGTGR.

Belongs to the universal ribosomal protein uL4 family. Part of the 50S ribosomal subunit.

Functionally, one of the primary rRNA binding proteins, this protein initially binds near the 5'-end of the 23S rRNA. It is important during the early stages of 50S assembly. It makes multiple contacts with different domains of the 23S rRNA in the assembled 50S subunit and ribosome. In terms of biological role, forms part of the polypeptide exit tunnel. This Nitrosomonas eutropha (strain DSM 101675 / C91 / Nm57) protein is Large ribosomal subunit protein uL4.